Reading from the N-terminus, the 274-residue chain is MVESNDIIKSGLAEKALKALILQCEENPSLKNDKDIHIIINTGKKMGINRDNIPRIIPLTKYKLFKPRDLNILLITKDPSALYRETLTKDEHTSELFKEIISVKNLRRRFKGSKLTQLYKDFDLVVADYRVHHLLPEVLGSRFYHGSKKLPYMIRMSKEVKLKRQQMVEKCDPIYVRAQLRSICKNTSYIPNNDNCLSVRVGYIQKHSIPEILQNIQDTINFLTDKSKRPQGGVIKGGIISIFVKTSNSTSLPIYQFSEARENQKNEDLSDIKL.

The protein belongs to the universal ribosomal protein uL1 family. Highly divergent. In terms of assembly, component of the 90S pre-ribosomes. Interacts with FAF1.

It localises to the nucleus. It is found in the nucleolus. In terms of biological role, involved in rRNA-processing and ribosome biosynthesis. This Saccharomyces cerevisiae (strain ATCC 204508 / S288c) (Baker's yeast) protein is Ribosome biogenesis protein UTP30 (UTP30).